The sequence spans 393 residues: Lipid-A-disaccharide synthase (393 aa).

The protein belongs to the LpxB family.

The enzyme catalyses a lipid X + a UDP-2-N,3-O-bis[(3R)-3-hydroxyacyl]-alpha-D-glucosamine = a lipid A disaccharide + UDP + H(+). The protein operates within bacterial outer membrane biogenesis; LPS lipid A biosynthesis. In terms of biological role, condensation of UDP-2,3-diacylglucosamine and 2,3-diacylglucosamine-1-phosphate to form lipid A disaccharide, a precursor of lipid A, a phosphorylated glycolipid that anchors the lipopolysaccharide to the outer membrane of the cell. In Rhodopseudomonas palustris (strain ATCC BAA-98 / CGA009), this protein is Lipid-A-disaccharide synthase.